The primary structure comprises 110 residues: uncharacterized protein (110 aa).

3 helical membrane passes run 32–52 (VLNV…ALVP), 57–77 (YTHM…CICI), and 90–110 (FLAS…TFVI).

Its subcellular location is the membrane. Functionally, may play a role in proper chromosome segregation. Suppresses the high-frequency loss of mini-chromosomes when overexpressed, and this suppression is completely dependent on silencing protein SIR4. This is an uncharacterized protein from Saccharomyces cerevisiae (strain ATCC 204508 / S288c) (Baker's yeast).